We begin with the raw amino-acid sequence, 224 residues long: Flagellar L-ring protein (224 aa).

An N-terminal signal peptide occupies residues 1-15 (MARYLVLAVALLLAA). Cys16 carries N-palmitoyl cysteine lipidation. Cys16 carries S-diacylglycerol cysteine lipidation.

The protein belongs to the FlgH family. As to quaternary structure, the basal body constitutes a major portion of the flagellar organelle and consists of four rings (L,P,S, and M) mounted on a central rod.

It is found in the cell outer membrane. Its subcellular location is the bacterial flagellum basal body. Functionally, assembles around the rod to form the L-ring and probably protects the motor/basal body from shearing forces during rotation. This chain is Flagellar L-ring protein, found in Shewanella baltica (strain OS185).